We begin with the raw amino-acid sequence, 450 residues long: Sulfide:quinone oxidoreductase, mitochondrial (450 aa).

Residues 53-54 (AG), E75, Q83, and V118 each bind FAD. Residues K134 and K173 each carry the N6-acetyllysine modification. C201 (cysteine persulfide intermediate) is an active-site residue. A disulfide bond links C201 and C379. Position 336 (D336) interacts with FAD. Residue S343 is modified to Phosphoserine. Residue 344-347 (KTAA) coordinates FAD. The active-site Cysteine persulfide intermediate is the C379.

The protein belongs to the SQRD family. FAD serves as cofactor.

Its subcellular location is the mitochondrion. It carries out the reaction ubiquinone-10 + hydrogen sulfide + sulfite + 2 H(+) = ubiquinol-10 + thiosulfate. It catalyses the reaction a quinone + hydrogen sulfide + glutathione + H(+) = S-sulfanylglutathione + a quinol. The enzyme catalyses ubiquinone-10 + hydrogen sulfide + glutathione + H(+) = S-sulfanylglutathione + ubiquinol-10. In terms of biological role, catalyzes the oxidation of hydrogen sulfide with the help of a quinone, such as ubiquinone-10, giving rise to thiosulfate and ultimately to sulfane (molecular sulfur) atoms. Requires an additional electron acceptor; can use sulfite, sulfide or cyanide (in vitro). It is believed the in vivo electron acceptor is glutathione. This is Sulfide:quinone oxidoreductase, mitochondrial from Mus musculus (Mouse).